The chain runs to 306 residues: UDP-3-O-acyl-N-acetylglucosamine deacetylase (306 aa).

3 residues coordinate Zn(2+): His79, His238, and Asp242. Catalysis depends on His265, which acts as the Proton donor.

This sequence belongs to the LpxC family. Zn(2+) serves as cofactor.

It carries out the reaction a UDP-3-O-[(3R)-3-hydroxyacyl]-N-acetyl-alpha-D-glucosamine + H2O = a UDP-3-O-[(3R)-3-hydroxyacyl]-alpha-D-glucosamine + acetate. It participates in glycolipid biosynthesis; lipid IV(A) biosynthesis; lipid IV(A) from (3R)-3-hydroxytetradecanoyl-[acyl-carrier-protein] and UDP-N-acetyl-alpha-D-glucosamine: step 2/6. In terms of biological role, catalyzes the hydrolysis of UDP-3-O-myristoyl-N-acetylglucosamine to form UDP-3-O-myristoylglucosamine and acetate, the committed step in lipid A biosynthesis. The protein is UDP-3-O-acyl-N-acetylglucosamine deacetylase of Shewanella sp. (strain W3-18-1).